We begin with the raw amino-acid sequence, 128 residues long: Con-Ins F2b (128 aa).

The first 24 residues, 1 to 24 (MTTSSYFLLVALGLLLYVCRSSFG), serve as a signal peptide directing secretion. 4 disulfides stabilise this stretch: Cys-29/Cys-104, Cys-41/Cys-107, Cys-53/Cys-120, and Cys-106/Cys-111. Residues 59–89 (LQGGTGKKRGRASLLRKRRAFLSMLKARAKR) constitute a propeptide, c peptide. Position 115 is a 4-carboxyglutamate; partial (Glu-115). At Ser-127 the chain carries Serine amide.

The protein belongs to the insulin family. As to quaternary structure, heterodimer of A and B chains; disulfide-linked. As to expression, expressed by the venom gland.

The protein localises to the secreted. In terms of biological role, this venom insulin facilitates prey capture by rapidly inducing hypoglycemic shock. Intraperitoneal injection of this peptide into zebrafish lowers blood glucose with the same potency than human insulin. In vivo, when applied to water, this peptide reduces overall locomotor activity of zebrafish larvae, observed as a significant decrease in the percentage of time spent swimming and movement frequency. The protein is Con-Ins F2b of Conus floridulus (Cone snail).